We begin with the raw amino-acid sequence, 319 residues long: Very-long-chain 3-oxoacyl-CoA reductase-A (319 aa).

A helical transmembrane segment spans residues 17–37; sequence LFWVGALITASLALYVVYKTI. NADP(+) is bound at residue 56-85; that stretch reads GKWAVVTGATDGIGKSYAEELARRGFSMML. The next 2 helical transmembrane spans lie at 188–208 and 282–302; these read GVILNISSASGMFPVPLLTIY and AVMGWVTTILAPIDLVLNLGL. Position 195 (S195) interacts with substrate. The Proton acceptor role is filled by Y208.

This sequence belongs to the short-chain dehydrogenases/reductases (SDR) family. 17-beta-HSD 3 subfamily.

The protein resides in the endoplasmic reticulum membrane. It catalyses the reaction a very-long-chain (3R)-3-hydroxyacyl-CoA + NADP(+) = a very-long-chain 3-oxoacyl-CoA + NADPH + H(+). The catalysed reaction is 17beta-estradiol + NAD(+) = estrone + NADH + H(+). It carries out the reaction 17beta-estradiol + NADP(+) = estrone + NADPH + H(+). The protein operates within lipid metabolism; fatty acid biosynthesis. Its pathway is steroid biosynthesis; estrogen biosynthesis. Functionally, catalyzes the second of the four reactions of the long-chain fatty acids elongation cycle. This endoplasmic reticulum-bound enzymatic process, allows the addition of two carbons to the chain of long- and very long-chain fatty acids/VLCFAs per cycle. This enzyme has a 3-ketoacyl-CoA reductase activity, reducing 3-ketoacyl-CoA to 3-hydroxyacyl-CoA, within each cycle of fatty acid elongation. Thereby, it may participate in the production of VLCFAs of different chain lengths that are involved in multiple biological processes as precursors of membrane lipids and lipid mediators. May also catalyze the transformation of estrone (E1) into estradiol (E2) and play a role in estrogen formation. This is Very-long-chain 3-oxoacyl-CoA reductase-A (hsd17b12a) from Danio rerio (Zebrafish).